A 629-amino-acid chain; its full sequence is tRNA uridine 5-carboxymethylaminomethyl modification enzyme MnmG (629 aa).

FAD is bound by residues 13-18 (GGGHAG), valine 125, and serine 180. Residue 273-287 (GPRYCPSIEDKVMRF) participates in NAD(+) binding. An FAD-binding site is contributed by glutamine 370.

The protein belongs to the MnmG family. In terms of assembly, homodimer. Heterotetramer of two MnmE and two MnmG subunits. FAD is required as a cofactor.

The protein localises to the cytoplasm. Its function is as follows. NAD-binding protein involved in the addition of a carboxymethylaminomethyl (cmnm) group at the wobble position (U34) of certain tRNAs, forming tRNA-cmnm(5)s(2)U34. The protein is tRNA uridine 5-carboxymethylaminomethyl modification enzyme MnmG of Salmonella typhi.